Consider the following 439-residue polypeptide: S-layer protein (439 aa).

Residues 1–30 (MKKNLRIVSAAAAALLAVAPIAATAMPVNA) form the signal peptide.

Glycosylated.

It localises to the secreted. The protein resides in the cell wall. The protein localises to the S-layer. The S-layer is a paracrystalline mono-layered assembly of proteins which coat the surface of bacteria. The polypeptide is S-layer protein (slpH) (Lactobacillus helveticus (Lactobacillus suntoryeus)).